A 254-amino-acid polypeptide reads, in one-letter code: Leucyl/phenylalanyl-tRNA--protein transferase (254 aa).

The protein belongs to the L/F-transferase family.

The protein localises to the cytoplasm. It catalyses the reaction N-terminal L-lysyl-[protein] + L-leucyl-tRNA(Leu) = N-terminal L-leucyl-L-lysyl-[protein] + tRNA(Leu) + H(+). It carries out the reaction N-terminal L-arginyl-[protein] + L-leucyl-tRNA(Leu) = N-terminal L-leucyl-L-arginyl-[protein] + tRNA(Leu) + H(+). The enzyme catalyses L-phenylalanyl-tRNA(Phe) + an N-terminal L-alpha-aminoacyl-[protein] = an N-terminal L-phenylalanyl-L-alpha-aminoacyl-[protein] + tRNA(Phe). Its function is as follows. Functions in the N-end rule pathway of protein degradation where it conjugates Leu, Phe and, less efficiently, Met from aminoacyl-tRNAs to the N-termini of proteins containing an N-terminal arginine or lysine. The protein is Leucyl/phenylalanyl-tRNA--protein transferase of Burkholderia cenocepacia (strain HI2424).